The following is a 276-amino-acid chain: 28 kDa ribonucleoprotein, chloroplastic (276 aa).

A chloroplast-targeting transit peptide spans 1–57; that stretch reads MATNGCLISLPPFFTTTKSISSYPFLSTQLKPISLSSSLPTLLSLNKRTTQFPTFVS. 2 consecutive RRM domains span residues 97–175 and 191–269; these read AKLF…KAAP and YRIY…AAEE.

It is found in the plastid. The protein resides in the chloroplast. Functionally, probably involved in the 3'-end processing of chloroplast mRNA's. The chain is 28 kDa ribonucleoprotein, chloroplastic from Nicotiana sylvestris (Wood tobacco).